Consider the following 300-residue polypeptide: DNA repair protein RecO (300 aa).

Belongs to the RecO family.

Its function is as follows. Involved in DNA repair and RecF pathway recombination. The sequence is that of DNA repair protein RecO from Nostoc punctiforme (strain ATCC 29133 / PCC 73102).